Reading from the N-terminus, the 131-residue chain is Holo-[acyl-carrier-protein] synthase (131 aa).

Residues D9 and E58 each contribute to the Mg(2+) site.

The protein belongs to the P-Pant transferase superfamily. AcpS family. It depends on Mg(2+) as a cofactor.

The protein localises to the cytoplasm. It catalyses the reaction apo-[ACP] + CoA = holo-[ACP] + adenosine 3',5'-bisphosphate + H(+). Functionally, transfers the 4'-phosphopantetheine moiety from coenzyme A to a Ser of acyl-carrier-protein. The polypeptide is Holo-[acyl-carrier-protein] synthase (Salmonella arizonae (strain ATCC BAA-731 / CDC346-86 / RSK2980)).